The primary structure comprises 531 residues: Jacalin-related lectin 16 (531 aa).

4 Jacalin-type lectin domains span residues methionine 1–tryptophan 87, proline 90–threonine 232, leucine 235–proline 378, and threonine 385–proline 528.

This sequence belongs to the jacalin lectin family.

This chain is Jacalin-related lectin 16 (JAL16), found in Arabidopsis thaliana (Mouse-ear cress).